The primary structure comprises 461 residues: Cysteine--tRNA ligase (461 aa).

A Zn(2+)-binding site is contributed by Cys-28. Positions 30–40 match the 'HIGH' region motif; it reads ITIYDLCHIGH. Zn(2+) contacts are provided by Cys-209, His-234, and Glu-238. The 'KMSKS' region signature appears at 266-270; the sequence is KMSKS. Lys-269 is a binding site for ATP.

Belongs to the class-I aminoacyl-tRNA synthetase family. In terms of assembly, monomer. It depends on Zn(2+) as a cofactor.

It is found in the cytoplasm. The enzyme catalyses tRNA(Cys) + L-cysteine + ATP = L-cysteinyl-tRNA(Cys) + AMP + diphosphate. This Photorhabdus laumondii subsp. laumondii (strain DSM 15139 / CIP 105565 / TT01) (Photorhabdus luminescens subsp. laumondii) protein is Cysteine--tRNA ligase.